A 717-amino-acid chain; its full sequence is Copine family protein 5 (717 aa).

The C2 domain occupies 193 to 318; the sequence is YLGGIIVSAE…KYGPGSDNVY (126 aa). In terms of domain architecture, VWFA spans 377–567; it reads ELDQRRFDGE…LNKSRIAETA (191 aa).

Belongs to the copine family.

This chain is Copine family protein 5 (cpna-5), found in Caenorhabditis elegans.